Reading from the N-terminus, the 160-residue chain is Phosphopantetheine adenylyltransferase (160 aa).

Substrate is bound at residue T9. ATP contacts are provided by residues 9 to 10 and H17; that span reads TF. Positions 41, 73, and 87 each coordinate substrate. ATP is bound by residues 88 to 90, E98, and 123 to 129; these read GLR and YSFLSSS.

The protein belongs to the bacterial CoaD family. Homohexamer. The cofactor is Mg(2+).

It is found in the cytoplasm. The enzyme catalyses (R)-4'-phosphopantetheine + ATP + H(+) = 3'-dephospho-CoA + diphosphate. It participates in cofactor biosynthesis; coenzyme A biosynthesis; CoA from (R)-pantothenate: step 4/5. Functionally, reversibly transfers an adenylyl group from ATP to 4'-phosphopantetheine, yielding dephospho-CoA (dPCoA) and pyrophosphate. This is Phosphopantetheine adenylyltransferase from Moorella thermoacetica (strain ATCC 39073 / JCM 9320).